Here is a 296-residue protein sequence, read N- to C-terminus: MAVLAPLIALVYSVPRLSRWLARPYYFLSALLSAAFLLVRKLPPVCESLPTQREDGNPCDFDWREVEILMFLSAIVMMKNRRSITVEQHVGNIFMFSKVANAILFFRLDIRMGLLYITLCIVFLMTCKPPLYMGPEYIKYFSDKTIDEELERDKRVTWIVEFFANWSSDCQSFAPIYADLSLKYNCTGLNFGKVDVGRYTDVSTRYKVSTSPLTKQLPTLILFQGGKEVMRRPQIDKKGRAVSWTFSEENVIREFNLNELYQRAKKLSKAGDKIPEEQPVAAVPAAVPDEESKKDK.

The signal sequence occupies residues 1-48 (MAVLAPLIALVYSVPRLSRWLARPYYFLSALLSAAFLLVRKLPPVCES). The Extracellular portion of the chain corresponds to 49–102 (LPTQREDGNPCDFDWREVEILMFLSAIVMMKNRRSITVEQHVGNIFMFSKVANA). The chain crosses the membrane as a helical span at residues 103–125 (ILFFRLDIRMGLLYITLCIVFLM). Residues 126 to 296 (TCKPPLYMGP…VPDEESKKDK (171 aa)) lie on the Cytoplasmic side of the membrane. One can recognise a Thioredoxin domain in the interval 132 to 269 (YMGPEYIKYF…LYQRAKKLSK (138 aa)). Phosphoserine is present on residues S211 and S243. A disordered region spans residues 272 to 296 (DKIPEEQPVAAVPAAVPDEESKKDK). The segment covering 277-287 (EQPVAAVPAAV) has biased composition (low complexity). The Di-lysine motif signature appears at 293 to 296 (KKDK).

In terms of assembly, monomer. Homodimer; disulfide-linked. Occurs in both reduced and oxidized monomeric form. Oxidative conditions increase homodimerization. Interacts with CANX. Interacts with ATP2A2.

It localises to the endoplasmic reticulum membrane. The protein resides in the mitochondrion membrane. Its function is as follows. Endoplasmic reticulum and mitochondria-associated protein that probably functions as a regulator of cellular redox state and thereby regulates protein post-translational modification, protein folding and mitochondrial activity. Indirectly regulates neuronal proliferation, migration, and organization in the developing brain. This chain is Thioredoxin-related transmembrane protein 2 (TMX2), found in Bos taurus (Bovine).